Reading from the N-terminus, the 302-residue chain is MSLSGIITALATPFGPDGTLDLDAWRRLLEQQLHGGVQGIVVAGSTGEAAALSDDEYDTLVRAAVAQVAGRVQVLAGTGLSGTAKTIAQTRRAATLGAQYALVVTPPYVRPTQAGLLAHFQAVADNGGLPVVLYNVPGRTGCDLLPETVAALVSHPNIVGIKEARSEPERVAALVAMRSDRFVVLSGDDGSAAQSMLAGADGLVSVASNALPSAYRRLCDLARTGQHEAANAWDTRLSEYHSFCGIESNPIPVKALLQRAGIGHGLRLPLLPLSAAHQPAADRLAANAVALEALSSREMLAA.

T46 contributes to the pyruvate binding site. Y134 (proton donor/acceptor) is an active-site residue. Catalysis depends on K162, which acts as the Schiff-base intermediate with substrate. Residue V204 participates in pyruvate binding.

The protein belongs to the DapA family. In terms of assembly, homotetramer; dimer of dimers.

The protein localises to the cytoplasm. The enzyme catalyses L-aspartate 4-semialdehyde + pyruvate = (2S,4S)-4-hydroxy-2,3,4,5-tetrahydrodipicolinate + H2O + H(+). It participates in amino-acid biosynthesis; L-lysine biosynthesis via DAP pathway; (S)-tetrahydrodipicolinate from L-aspartate: step 3/4. Functionally, catalyzes the condensation of (S)-aspartate-beta-semialdehyde [(S)-ASA] and pyruvate to 4-hydroxy-tetrahydrodipicolinate (HTPA). This is 4-hydroxy-tetrahydrodipicolinate synthase from Xanthomonas campestris pv. campestris (strain ATCC 33913 / DSM 3586 / NCPPB 528 / LMG 568 / P 25).